The primary structure comprises 589 residues: MWVLQALAIMLSIQAGVLDLVEVPPVVRSLPVALPAPVNLPAVLPGSPGLNDPAKNRMLPPKRPGAPSRGGKCAPAARYFLSSDKLQAYLLSILPPQIEDMVKCDKVNMEGVLGDILATMQDSNLLSILDITSLLQGGGGLGLGGLLGKEGNEDPSKPSSGSKATGGLGQLLPEGLPGKEGLGGLLNLGGGKGSGKGLLNGDGLSNVVKPLDDIVENVDSLKAAVQDKVKSVVPENIKDPFSDLLNMDIQETMLKLKVKQVKVGSTDINMGADGIKVLSEVTADVEGEGLLGPVFTLLQFQSVMDVTMNIAVSSNNTQCVNLDVQDTHMHVKEMNIQLLQTVTETVPLPTSLPLNDIIPIVLTAKMNENLEKSDSCGIVLSDFNDCKNTTGLFGYQVHTARISPKGLSIDYCVKANIDNKTVPVPGGRLPPDPKNANVSITTASSALRTLVKYVAKQSSVQMNDLEAQITYIAFAPQENNMLRLLYKVDITKDSQPYATGETKLFISHASKILNSKLVPDVKLTRSEHSVVPPETKEEVEGIMAEVTRKAWSRFNELYKKMSIPDGVSSNTLTNSDVKLLRSNDLQAAS.

Residues 1–29 (MWVLQALAIMLSIQAGVLDLVEVPPVVRS) form the signal peptide. Disordered stretches follow at residues 49–71 (GLND…SRGG) and 146–170 (LLGK…GLGQ). 2 N-linked (GlcNAc...) asparagine glycosylation sites follow: Asn419 and Asn437.

N-glycosylated. The N-glycans consist mainly of complex sialylated and fucosylated biantennary structures. In terms of tissue distribution, abundant in the lateral nasal glands. Also present in the posterior septal and vomeronasal glands.

Its subcellular location is the secreted. This Rattus norvegicus (Rat) protein is Vomeromodulin.